The primary structure comprises 484 residues: Acetyl-coenzyme A carboxylase carboxyl transferase subunit beta, chloroplastic (484 aa).

Residues 223–484 (LWIQCDNCYG…LHAFFPLNKN (262 aa)) enclose the CoA carboxyltransferase N-terminal domain. Zn(2+) contacts are provided by Cys-227, Cys-230, Cys-243, and Cys-246. The segment at 227–246 (CDNCYGLMYKKVKMNVCEQC) adopts a C4-type zinc-finger fold.

The protein belongs to the AccD/PCCB family. Acetyl-CoA carboxylase is a heterohexamer composed of biotin carboxyl carrier protein, biotin carboxylase and 2 subunits each of ACCase subunit alpha and ACCase plastid-coded subunit beta (accD). It depends on Zn(2+) as a cofactor.

Its subcellular location is the plastid. The protein resides in the chloroplast stroma. It carries out the reaction N(6)-carboxybiotinyl-L-lysyl-[protein] + acetyl-CoA = N(6)-biotinyl-L-lysyl-[protein] + malonyl-CoA. Its pathway is lipid metabolism; malonyl-CoA biosynthesis; malonyl-CoA from acetyl-CoA: step 1/1. Functionally, component of the acetyl coenzyme A carboxylase (ACC) complex. Biotin carboxylase (BC) catalyzes the carboxylation of biotin on its carrier protein (BCCP) and then the CO(2) group is transferred by the transcarboxylase to acetyl-CoA to form malonyl-CoA. The polypeptide is Acetyl-coenzyme A carboxylase carboxyl transferase subunit beta, chloroplastic (Crucihimalaya wallichii (Rock-cress)).